Consider the following 62-residue polypeptide: Photosystem II reaction center X protein (62 aa).

The helical transmembrane segment at 26–46 threads the bilayer; it reads IASFFAAALLIVIPAATFLIF.

This sequence belongs to the PsbX family. Type 2 subfamily. As to quaternary structure, PSII consists of a core antenna complex that captures photons, and an electron transfer chain that converts photonic excitation into a charge separation. PSII forms dimeric complexes.

It is found in the cellular thylakoid membrane. Involved in the binding and/or turnover of quinones at the Q(B) site of Photosystem II. This Prochlorococcus marinus (strain MIT 9515) protein is Photosystem II reaction center X protein.